Consider the following 36-residue polypeptide: Photosystem I reaction center subunit VIII (36 aa).

The chain crosses the membrane as a helical span at residues 5 to 27 (FLPSILVPLVGLVFPAIAIASLF).

Belongs to the PsaI family.

Its subcellular location is the plastid. The protein localises to the chloroplast thylakoid membrane. In terms of biological role, may help in the organization of the PsaL subunit. The chain is Photosystem I reaction center subunit VIII from Chaetosphaeridium globosum (Charophycean green alga).